A 412-amino-acid chain; its full sequence is Poly-beta-1,6-N-acetyl-D-glucosamine synthase (412 aa).

4 consecutive transmembrane segments (helical) span residues 7 to 28 (LLFY…YFFI), 298 to 320 (IASI…TANI), 332 to 354 (IFFF…ALFI), and 364 to 386 (VGLI…VVIM).

The protein belongs to the glycosyltransferase 2 family.

Its subcellular location is the cell membrane. In terms of biological role, N-acetylglucosaminyltransferase that catalyzes the polymerization of single monomer units of UDP-N-acetylglucosamine to produce the linear homomer poly-beta-1,6-N-acetyl-D-glucosamine (PNAG, also referred to as PIA), a biofilm adhesin polysaccharide. Requires IcaD for full activity. The polypeptide is Poly-beta-1,6-N-acetyl-D-glucosamine synthase (icaA) (Staphylococcus epidermidis (strain ATCC 35984 / DSM 28319 / BCRC 17069 / CCUG 31568 / BM 3577 / RP62A)).